The following is a 350-amino-acid chain: Small-conductance mechanosensitive channel MscMJ (350 aa).

The next 5 helical transmembrane spans lie at I10 to V30, L59 to L79, V91 to F111, I130 to A150, and V154 to L174.

The protein belongs to the MscS (TC 1.A.23) family.

It localises to the cell membrane. Its function is as follows. Small-conductance mechanosensitive channel that opens in response to stretch forces in the membrane lipid bilayer. Exhibits a sixfold preference for cations over anions. Non-rectifying. The sequence is that of Small-conductance mechanosensitive channel MscMJ from Methanocaldococcus jannaschii (strain ATCC 43067 / DSM 2661 / JAL-1 / JCM 10045 / NBRC 100440) (Methanococcus jannaschii).